A 350-amino-acid polypeptide reads, in one-letter code: 2-oxoisovalerate dehydrogenase subunit beta (350 aa).

Heterodimer of an alpha and a beta chain. The cofactor is thiamine diphosphate.

The enzyme catalyses N(6)-[(R)-lipoyl]-L-lysyl-[protein] + 3-methyl-2-oxobutanoate + H(+) = N(6)-[(R)-S(8)-2-methylpropanoyldihydrolipoyl]-L-lysyl-[protein] + CO2. The branched-chain alpha-keto dehydrogenase complex catalyzes the overall conversion of alpha-keto acids to acyl-CoA and CO(2). It contains multiple copies of three enzymatic components: branched-chain alpha-keto acid decarboxylase (E1), lipoamide acyltransferase (E2) and lipoamide dehydrogenase (E3). This Pseudomonas aeruginosa (strain ATCC 15692 / DSM 22644 / CIP 104116 / JCM 14847 / LMG 12228 / 1C / PRS 101 / PAO1) protein is 2-oxoisovalerate dehydrogenase subunit beta (bkdA2).